The chain runs to 196 residues: UPF0215 protein MM_1007 (196 aa).

This sequence belongs to the UPF0215 family.

In Methanosarcina mazei (strain ATCC BAA-159 / DSM 3647 / Goe1 / Go1 / JCM 11833 / OCM 88) (Methanosarcina frisia), this protein is UPF0215 protein MM_1007.